The primary structure comprises 139 residues: Large ribosomal subunit protein bL17 (139 aa).

Belongs to the bacterial ribosomal protein bL17 family. Part of the 50S ribosomal subunit. Contacts protein L32.

This Cereibacter sphaeroides (strain ATCC 17025 / ATH 2.4.3) (Rhodobacter sphaeroides) protein is Large ribosomal subunit protein bL17.